A 1058-amino-acid polypeptide reads, in one-letter code: Outer capsid protein VP4 (1058 aa).

This sequence belongs to the orthoreovirus lambda-2 protein family.

It is found in the virion. The catalysed reaction is a 5'-end diphospho-ribonucleoside in mRNA + GTP + H(+) = a 5'-end (5'-triphosphoguanosine)-ribonucleoside in mRNA + diphosphate. It catalyses the reaction a 5'-end (5'-triphosphoguanosine)-ribonucleoside in mRNA + S-adenosyl-L-methionine = a 5'-end (N(7)-methyl 5'-triphosphoguanosine)-ribonucleoside in mRNA + S-adenosyl-L-homocysteine. In terms of biological role, outer capsid protein involved in mRNA capping. Catalyzes the last 3 enzymatic activities for formation of the 5' cap structure on the viral plus-strand transcripts, namely the RNA guanylyltransferase, RNA-7N- and RNA-2'O-methyltransferase activities. The sequence is that of Outer capsid protein VP4 (S4) from Lymantria dispar cypovirus 1 (isolate Rao) (LdCPV-1).